We begin with the raw amino-acid sequence, 184 residues long: Guanylate kinase (184 aa).

One can recognise a Guanylate kinase-like domain in the interval 5–183 (NGLIVITGPS…ALLEIKKLIK (179 aa)). 12 to 19 (GPSGVGKG) contacts ATP.

Belongs to the guanylate kinase family.

It is found in the cytoplasm. The enzyme catalyses GMP + ATP = GDP + ADP. Essential for recycling GMP and indirectly, cGMP. The protein is Guanylate kinase of Prochlorococcus marinus (strain SARG / CCMP1375 / SS120).